We begin with the raw amino-acid sequence, 347 residues long: Protein RecA (347 aa).

67-74 is a binding site for ATP; that stretch reads GPESSGKT.

The protein belongs to the RecA family.

The protein resides in the cytoplasm. In terms of biological role, can catalyze the hydrolysis of ATP in the presence of single-stranded DNA, the ATP-dependent uptake of single-stranded DNA by duplex DNA, and the ATP-dependent hybridization of homologous single-stranded DNAs. It interacts with LexA causing its activation and leading to its autocatalytic cleavage. This is Protein RecA from Sulfurovum sp. (strain NBC37-1).